The sequence spans 105 residues: Small ribosomal subunit protein uS10 (105 aa).

The protein belongs to the universal ribosomal protein uS10 family. Part of the 30S ribosomal subunit.

Involved in the binding of tRNA to the ribosomes. This chain is Small ribosomal subunit protein uS10, found in Rickettsia massiliae (strain Mtu5).